Consider the following 330-residue polypeptide: MTTYGSFPGARPRRLRTTPVMRRMVAETRLHPADFILPAFVREGVSEPVPIAAMPGVVQHTRDTLKKAAAEAVEAGVSGIMLFGVPEDGKKDAAGTAGTDPDGILQVALRDVRAEVGDELLVMSDLCLDEFTDHGHCGVLDGQGRVDNDATLERYAEMAQVQADAGAHVVGPSGMMDGQIGVIRDALDQIGREDVAILAYTAKYASAFYGPFREAVGSSLKGDRKTYQQDSANARESLRELALDLEEGADMVMVKPAGPYLDILAKVAEASDVPVAAYQISGEYSMIEAAAEKGWIDRDRAILESLTGIKRAGARNILTYWATEVARTLR.

Catalysis depends on lysine 203, which acts as the Schiff-base intermediate with substrate. 5-aminolevulinate is bound by residues arginine 213 and arginine 224. A Mg(2+)-binding site is contributed by glutamate 240. The Schiff-base intermediate with substrate role is filled by lysine 255. 5-aminolevulinate-binding residues include serine 281 and tyrosine 320.

Belongs to the ALAD family. As to quaternary structure, homooctamer.

It catalyses the reaction 2 5-aminolevulinate = porphobilinogen + 2 H2O + H(+). Its pathway is porphyrin-containing compound metabolism; protoporphyrin-IX biosynthesis; coproporphyrinogen-III from 5-aminolevulinate: step 1/4. Catalyzes an early step in the biosynthesis of tetrapyrroles. Binds two molecules of 5-aminolevulinate per subunit, each at a distinct site, and catalyzes their condensation to form porphobilinogen. In Streptomyces coelicolor (strain ATCC BAA-471 / A3(2) / M145), this protein is Delta-aminolevulinic acid dehydratase (hemB).